We begin with the raw amino-acid sequence, 279 residues long: Large ribosomal subunit protein uL2 (279 aa).

2 disordered regions span residues 31–61 (KSLL…HKRH) and 222–279 (GMAM…RNAK). Residues 49–61 (KTSRHRGGGHKRH) are compositionally biased toward basic residues. A compositionally biased stretch (gly residues) spans 232–242 (MGGGEGKSKSG). The span at 259–268 (LKTRNRKKAS) shows a compositional bias: basic residues.

This sequence belongs to the universal ribosomal protein uL2 family. In terms of assembly, part of the 50S ribosomal subunit. Forms a bridge to the 30S subunit in the 70S ribosome.

Its function is as follows. One of the primary rRNA binding proteins. Required for association of the 30S and 50S subunits to form the 70S ribosome, for tRNA binding and peptide bond formation. It has been suggested to have peptidyltransferase activity; this is somewhat controversial. Makes several contacts with the 16S rRNA in the 70S ribosome. This is Large ribosomal subunit protein uL2 from Chlorobium chlorochromatii (strain CaD3).